The sequence spans 72 residues: Aurein-2.5 (72 aa).

A signal peptide spans 1–22; the sequence is MAFLKKSLFLVLFLGLVSLSIC. Positions 23 to 49 are excised as a propeptide; it reads EKEKRQNEEDEDENEAANHEEGSEEKR. Positions 27-47 are disordered; the sequence is RQNEEDEDENEAANHEEGSEE. Positions 38–47 are enriched in basic and acidic residues; the sequence is AANHEEGSEE. At Leu-65 the chain carries Leucine amide. Residues 69-72 constitute a propeptide that is removed on maturation; that stretch reads NDLE.

This sequence belongs to the frog skin active peptide (FSAP) family. Aurein subfamily. As to quaternary structure, may be monomeric or may oligomerize as homodimers or homotrimers in Gram-positive and Gram-negative bacteria mimetic membranes. Post-translationally, C-terminal amidation enhances antibacterial activity. This increase may be due to stabilization of the alpha-helical structure at the membrane interface. In terms of tissue distribution, expressed by the skin dorsal glands.

It is found in the secreted. Its subcellular location is the target cell membrane. In terms of biological role, amphipathic alpha-helical antimicrobial peptide with moderate to potent activity against Gram-positive bacteria, Gram-negative bacteria and fungi. Also shows a weak activity against biofilm of both Gram-positive and Gram-negative bacteria. Probably acts by disturbing membrane functions with its amphipathic structure. Kills fungi via membranolytic action. Enhanced sterol levels in lipid composition membranes reduce interaction of this peptide with membranes, having a protective effect against the lytic ability of the peptide. Shows anticancer activity. The sequence is that of Aurein-2.5 from Ranoidea aurea (Green and golden bell frog).